The following is a 274-amino-acid chain: 2,3,4,5-tetrahydropyridine-2,6-dicarboxylate N-succinyltransferase (274 aa).

This sequence belongs to the transferase hexapeptide repeat family.

The protein localises to the cytoplasm. It catalyses the reaction (S)-2,3,4,5-tetrahydrodipicolinate + succinyl-CoA + H2O = (S)-2-succinylamino-6-oxoheptanedioate + CoA. Its pathway is amino-acid biosynthesis; L-lysine biosynthesis via DAP pathway; LL-2,6-diaminopimelate from (S)-tetrahydrodipicolinate (succinylase route): step 1/3. The polypeptide is 2,3,4,5-tetrahydropyridine-2,6-dicarboxylate N-succinyltransferase (Shigella boydii serotype 18 (strain CDC 3083-94 / BS512)).